Consider the following 896-residue polypeptide: Desmocollin-3 (896 aa).

The first 27 residues, 1 to 27, serve as a signal peptide directing secretion; that stretch reads MAAAGPRRSVRGAVCLHLLLTLVIFSR. Residues 28–135 constitute a propeptide that is removed on maturation; it reads AGEACKKVIL…RETVLRRAKR (108 aa). Cadherin domains are found at residues 136–243, 244–355, 356–471, 472–579, and 580–690; these read RWAP…HPVF, TEAI…APTF, RQNA…GPEC, TPAA…EILQ, and EYVV…ILGK. Over 136 to 690 the chain is Extracellular; it reads RWAPIPCSMQ…SRSTGVILGK (555 aa). A glycan (N-linked (GlcNAc...) asparagine) is linked at Asn166. N-linked (GlcNAc...) asparagine glycosylation is found at Asn392, Asn546, and Asn629. Residues 691–711 traverse the membrane as a helical segment; that stretch reads WAILAILLGIALLFSVLLTLV. The Cytoplasmic portion of the chain corresponds to 712-896; the sequence is CGVFGATKGK…ITLAEACTKR (185 aa).

May form homodimers. Interacts with DSG1; there is evidence to suggest that the interaction promotes cell-cell adhesion of keratinocytes. Expressed throughout the basal and spinous layer of the epidermis with weak expression in the granular layer (at protein level). Also expressed in the buccal mucosa, esophagus and cervix (at protein level).

Its subcellular location is the cell membrane. The protein localises to the cell junction. The protein resides in the desmosome. It localises to the cytoplasm. A component of desmosome cell-cell junctions which are required for positive regulation of cellular adhesion. Required for cell-cell adhesion in the epidermis, as a result required for the maintenance of the dermal cohesion and the dermal barrier function. Required for cell-cell adhesion of epithelial cell layers surrounding the telogen hair club, as a result plays an important role in telogen hair shaft anchorage. Essential for successful completion of embryo compaction and embryo development. In Homo sapiens (Human), this protein is Desmocollin-3 (DSC3).